A 462-amino-acid polypeptide reads, in one-letter code: Jasmonoyl--L-amino acid synthetase GH3.3 (462 aa).

Serine 103 contacts ATP. Jasmonate is bound at residue serine 106. Residues threonine 126, asparagine 172, and 337–342 contribute to the ATP site; that span reads GASEGW. Position 170-174 (170-174) interacts with an L-alpha-amino acid; the sequence is TTNVY. Jasmonate is bound by residues 334–337 and serine 339; that span reads AEYG.

The protein belongs to the IAA-amido conjugating enzyme family. As to expression, expressed in green shoots and flowers.

It carries out the reaction a jasmonate + an L-alpha-amino acid + ATP = a jasmonyl-L-amino acid + AMP + diphosphate + H(+). Functionally, catalyzes the synthesis of jasmonate-amino acid conjugates by adenylation. Catalyzes the conjugation of jasmonate (JA) to Ile when expressed in a heterologous system (E.coli). Catalyzes in vitro the conjugation of jasmonate (JA) to Ile, Phe, Leu, Met, Val and Trp. May catalyze the synthesis of indole-3-acetic acid (IAA)-amino acid conjugates, providing a mechanism for the plant to cope with the presence of excess auxin. The chain is Jasmonoyl--L-amino acid synthetase GH3.3 from Oryza sativa subsp. japonica (Rice).